Here is a 653-residue protein sequence, read N- to C-terminus: Chaperone protein DnaK (653 aa).

Thr200 carries the post-translational modification Phosphothreonine; by autocatalysis. Residues 612 to 653 (QGAAGAAGAAGGAGAAAGAEAAGASQQADDVVDAEFKEVKKD) are disordered. Positions 627–639 (AAGAEAAGASQQA) are enriched in low complexity.

This sequence belongs to the heat shock protein 70 family.

Acts as a chaperone. In Paraburkholderia phymatum (strain DSM 17167 / CIP 108236 / LMG 21445 / STM815) (Burkholderia phymatum), this protein is Chaperone protein DnaK.